A 362-amino-acid polypeptide reads, in one-letter code: Fructose-bisphosphate aldolase (362 aa).

Ser-63 is a D-glyceraldehyde 3-phosphate binding site. Asp-112 serves as the catalytic Proton donor. 4 residues coordinate Zn(2+): His-113, Asp-147, Glu-177, and His-229. Position 230 (Gly-230) interacts with dihydroxyacetone phosphate. His-268 is a binding site for Zn(2+). Residues 269-271 and 290-293 each bind dihydroxyacetone phosphate; these read GGS and NVDT.

This sequence belongs to the class II fructose-bisphosphate aldolase family. As to quaternary structure, homodimer. It depends on Zn(2+) as a cofactor.

It catalyses the reaction beta-D-fructose 1,6-bisphosphate = D-glyceraldehyde 3-phosphate + dihydroxyacetone phosphate. Its pathway is carbohydrate degradation; glycolysis; D-glyceraldehyde 3-phosphate and glycerone phosphate from D-glucose: step 4/4. Functionally, catalyzes the aldol condensation of dihydroxyacetone phosphate (DHAP or glycerone-phosphate) with glyceraldehyde 3-phosphate (G3P) to form fructose 1,6-bisphosphate (FBP) in gluconeogenesis and the reverse reaction in glycolysis. This chain is Fructose-bisphosphate aldolase (fba), found in Neurospora crassa (strain ATCC 24698 / 74-OR23-1A / CBS 708.71 / DSM 1257 / FGSC 987).